The primary structure comprises 190 residues: Anthranilate synthase component 2 (190 aa).

In terms of domain architecture, Glutamine amidotransferase type-1 spans 1–190; that stretch reads MILLIDNYDS…ILQNFINCLN (190 aa). L-glutamine is bound at residue 52–54; sequence CPG. Cys-79 acts as the Nucleophile; for GATase activity in catalysis. L-glutamine is bound by residues Gln-83 and 129–130; that span reads SL. Residues His-169 and Glu-171 contribute to the active site.

As to quaternary structure, tetramer of two components I and two components II.

The protein resides in the plastid. Its subcellular location is the cyanelle. The catalysed reaction is chorismate + L-glutamine = anthranilate + pyruvate + L-glutamate + H(+). Its pathway is amino-acid biosynthesis; L-tryptophan biosynthesis; L-tryptophan from chorismate: step 1/5. The polypeptide is Anthranilate synthase component 2 (trpG) (Cyanophora paradoxa).